The chain runs to 107 residues: Ferredoxin 1 (107 aa).

4Fe-4S ferredoxin-type domains follow at residues 2 to 30 (TFVV…YEGP) and 31 to 60 (NFLV…SEDE). The [3Fe-4S] cluster site is built by Cys-9 and Cys-17. [4Fe-4S] cluster-binding residues include Cys-21, Cys-40, Cys-43, and Cys-46. A [3Fe-4S] cluster-binding site is contributed by Cys-50.

[4Fe-4S] cluster is required as a cofactor. It depends on [3Fe-4S] cluster as a cofactor.

Its function is as follows. Ferredoxins are iron-sulfur proteins that transfer electrons in a wide variety of metabolic reactions. This Pseudomonas aeruginosa (strain ATCC 15692 / DSM 22644 / CIP 104116 / JCM 14847 / LMG 12228 / 1C / PRS 101 / PAO1) protein is Ferredoxin 1 (fdxA).